A 740-amino-acid polypeptide reads, in one-letter code: Eukaryotic translation initiation factor 3 subunit B (740 aa).

Over residues methionine 1–glutamate 10 the composition is skewed to polar residues. The interval methionine 1–glutamate 20 is disordered. The 87-residue stretch at threonine 40 to aspartate 126 folds into the RRM domain. 6 WD repeats span residues alanine 193–glutamine 230, proline 232–valine 289, glutamate 302–lysine 343, serine 455–alanine 496, isoleucine 513–glutamate 556, and threonine 571–alanine 609. Positions alanine 696–glutamate 721 are disordered.

The protein belongs to the eIF-3 subunit B family. In terms of assembly, component of the eukaryotic translation initiation factor 3 (eIF-3) complex.

The protein localises to the cytoplasm. In terms of biological role, RNA-binding component of the eukaryotic translation initiation factor 3 (eIF-3) complex, which is involved in protein synthesis of a specialized repertoire of mRNAs and, together with other initiation factors, stimulates binding of mRNA and methionyl-tRNAi to the 40S ribosome. The eIF-3 complex specifically targets and initiates translation of a subset of mRNAs involved in cell proliferation. This chain is Eukaryotic translation initiation factor 3 subunit B (prt1), found in Aspergillus fumigatus (strain ATCC MYA-4609 / CBS 101355 / FGSC A1100 / Af293) (Neosartorya fumigata).